The following is a 176-amino-acid chain: Disulfide bond formation protein B (176 aa).

Residues 1–14 lie on the Cytoplasmic side of the membrane; that stretch reads MLRFLNQCSQGRGA. Residues 15 to 31 form a helical membrane-spanning segment; that stretch reads WLLMAFTALALELTALW. At 32-49 the chain is on the periplasmic side; that stretch reads FQHVMLLKPCVLCIYERC. A disulfide bridge connects residues Cys-41 and Cys-44. A helical membrane pass occupies residues 50–65; it reads ALFGVLGAALIGAIAP. Residues 66–71 lie on the Cytoplasmic side of the membrane; it reads KTPLRY. A helical membrane pass occupies residues 72–89; that stretch reads VAMVIWLYSAFRGVQLTY. The Periplasmic portion of the chain corresponds to 90–144; sequence EHTMLQLYPSPFATCDFMVRFPEWLPLDKWVPQVFVASGDCAERQWDFLGMEMPQ. A disulfide bridge links Cys-104 with Cys-130. The helical transmembrane segment at 145–163 threads the bilayer; the sequence is WLLGIFIAYLIVAVLVVIS. Residues 164–176 are Cytoplasmic-facing; it reads QPFKAKKRDLFGR.

This sequence belongs to the DsbB family.

Its subcellular location is the cell inner membrane. In terms of biological role, required for disulfide bond formation in some periplasmic proteins such as PhoA or OmpA. Acts by oxidizing the DsbA protein. The sequence is that of Disulfide bond formation protein B from Shigella flexneri.